Reading from the N-terminus, the 184-residue chain is MKIAQEIRAGNVIMHGKDPMVVLKTEYSRGGRNSATVRMKLKSLIANFNTEVVFKADDKIDQIVLDKKECTYSYFADPMYVCMDTEYNQYEVEAENMGDALNYLEDGMPVEVVFYDGKAISVELPTSVEREITWTEPAVKGDTSGKVLKPAKIATGFEVPVPLFVSQGDKIEIDTRTGEYRKRV.

This sequence belongs to the elongation factor P family.

It localises to the cytoplasm. It functions in the pathway protein biosynthesis; polypeptide chain elongation. In terms of biological role, involved in peptide bond synthesis. Stimulates efficient translation and peptide-bond synthesis on native or reconstituted 70S ribosomes in vitro. Probably functions indirectly by altering the affinity of the ribosome for aminoacyl-tRNA, thus increasing their reactivity as acceptors for peptidyl transferase. This Variovorax paradoxus (strain S110) protein is Elongation factor P.